The sequence spans 93 residues: Cobalt transport protein CbiN (93 aa).

The next 2 membrane-spanning stretches (helical) occupy residues 5 to 25 and 63 to 83; these read LILL…NHGG and LLFT…LGYA.

Belongs to the CbiN family. As to quaternary structure, forms an energy-coupling factor (ECF) transporter complex composed of an ATP-binding protein (A component, CbiO), a transmembrane protein (T component, CbiQ) and 2 possible substrate-capture proteins (S components, CbiM and CbiN) of unknown stoichimetry.

The protein localises to the cell inner membrane. It participates in cofactor biosynthesis; adenosylcobalamin biosynthesis. In terms of biological role, part of the energy-coupling factor (ECF) transporter complex CbiMNOQ involved in cobalt import. This Klebsiella pneumoniae (strain 342) protein is Cobalt transport protein CbiN.